The primary structure comprises 167 residues: Phospholipase A and acyltransferase 1 (167 aa).

At 1 to 138 the chain is on the cytoplasmic side; it reads MAVNDCFSLT…GEGVSEQANR (138 aa). The LRAT domain occupies 20–135; the sequence is LIEVFRPCYQ…LRYGEGVSEQ (116 aa). Histidine 30 is a catalytic residue. Cysteine 119 serves as the catalytic Acyl-thioester intermediate. Residues 139–159 form a helical membrane-spanning segment; sequence AIGTIGLVAAGIDIFTFLGLF. At 160–167 the chain is on the lumenal side; it reads PKRQRTKY.

The protein belongs to the H-rev107 family. Expressed in skeletal muscle, heart, brain, bone marrow and testis. In terms of tissue distribution, abundantly expressed in brain, heart, and skeletal muscle.

Its subcellular location is the membrane. The protein localises to the cytoplasm. It localises to the nucleus. It carries out the reaction a 1,2-diacyl-sn-glycero-3-phosphocholine + H2O = a 1-acyl-sn-glycero-3-phosphocholine + a fatty acid + H(+). The catalysed reaction is a 1,2-diacyl-sn-glycero-3-phosphocholine + H2O = a 2-acyl-sn-glycero-3-phosphocholine + a fatty acid + H(+). It catalyses the reaction 1,2-dihexadecanoyl-sn-glycero-3-phosphocholine + H2O = 2-hexadecanoyl-sn-glycero-3-phosphocholine + hexadecanoate + H(+). The enzyme catalyses 1,2-dihexadecanoyl-sn-glycero-3-phosphocholine + H2O = 1-hexadecanoyl-sn-glycero-3-phosphocholine + hexadecanoate + H(+). It carries out the reaction 1-hexadecanoyl-2-(5Z,8Z,11Z,14Z-eicosatetraenoyl)-sn-glycero-3-phosphoethanolamine + H2O = 2-(5Z,8Z,11Z,14Z)-eicosatetraenoyl-sn-glycero-3-phosphoethanolamine + hexadecanoate + H(+). The catalysed reaction is 1-hexadecanoyl-2-(5Z,8Z,11Z,14Z-eicosatetraenoyl)-sn-glycero-3-phosphoethanolamine + H2O = 1-hexadecanoyl-sn-glycero-3-phosphoethanolamine + (5Z,8Z,11Z,14Z)-eicosatetraenoate + H(+). It catalyses the reaction 1,2-di-(9Z-octadecenoyl)-sn-glycero-3-phosphoethanolamine + 1,2-dihexadecanoyl-sn-glycero-3-phosphocholine = hexadecanoyl-sn-glycero-3-phosphocholine + N-hexadecanoyl-1,2-di-(9Z-octadecenoyl)-sn-glycero-3-phosphoethanolamine + H(+). The enzyme catalyses 1,2-dihexadecanoyl-sn-glycero-3-phosphocholine + a 2-acyl-sn-glycero-3-phosphocholine = a 1-hexadecanoyl-2-acyl-sn-glycero-3-phosphocholine + 2-hexadecanoyl-sn-glycero-3-phosphocholine. Its function is as follows. Exhibits both phospholipase A1/2 and acyltransferase activities. Shows phospholipase A1 (PLA1) and A2 (PLA2) activity, catalyzing the calcium-independent release of fatty acids from the sn-1 or sn-2 position of glycerophospholipids. Shows O-acyltransferase activity, catalyzing the transfer of a fatty acyl group from glycerophospholipid to the hydroxyl group of lysophospholipid. Shows N-acyltransferase activity, catalyzing the calcium-independent transfer of a fatty acyl group at the sn-1 position of phosphatidylcholine (PC) and other glycerophospholipids to the primary amine of phosphatidylethanolamine (PE), forming N-acylphosphatidylethanolamine (NAPE), which serves as precursor for N-acylethanolamines (NAEs). This is Phospholipase A and acyltransferase 1 from Mus musculus (Mouse).